Reading from the N-terminus, the 152-residue chain is MFLFIIIAVVLLVDQATKAAVQMLMCQGESIPVVPPAFYLTYIMNPGAAFGLLPHKKMLFVTVTVIIIAGVLVGYFKIRPRKPVLDYGLGLVAGGALGNLADRLRYGLVVDFLDFRIWPVFNLADTAIVTGAFLLAWALLNDSDKSSKKERK.

3 consecutive transmembrane segments (helical) span residues 33 to 53 (VVPPAFYLTYIMNPGAAFGLL), 58 to 78 (MLFVTVTVIIIAGVLVGYFKI), and 83 to 102 (PVLDYGLGLVAGGALGNLAD). Catalysis depends on residues D111 and D125. Residues 120–140 (VFNLADTAIVTGAFLLAWALL) traverse the membrane as a helical segment.

Belongs to the peptidase A8 family.

Its subcellular location is the cell membrane. It catalyses the reaction Release of signal peptides from bacterial membrane prolipoproteins. Hydrolyzes -Xaa-Yaa-Zaa-|-(S,diacylglyceryl)Cys-, in which Xaa is hydrophobic (preferably Leu), and Yaa (Ala or Ser) and Zaa (Gly or Ala) have small, neutral side chains.. It functions in the pathway protein modification; lipoprotein biosynthesis (signal peptide cleavage). Its function is as follows. This protein specifically catalyzes the removal of signal peptides from prolipoproteins. This Pelotomaculum thermopropionicum (strain DSM 13744 / JCM 10971 / SI) protein is Lipoprotein signal peptidase.